The sequence spans 536 residues: Protoporphyrinogen oxidase, chloroplastic (536 aa).

The N-terminal 36 residues, 1-36 (MAAAAAAMATATSATAAPPLRIRDAARRTRRRGHVR), are a transit peptide targeting the chloroplast. Residues 62 to 67 (GGGISG), 87 to 88 (EA), and 111 to 114 (GPNS) contribute to the FAD site. The interval 248–272 (TIKTIQERGKNPKPPRDPRLPTPKG) is disordered. Basic and acidic residues predominate over residues 252–266 (IQERGKNPKPPRDPR). 510-512 (VAL) is a binding site for FAD.

The protein belongs to the protoporphyrinogen/coproporphyrinogen oxidase family. Protoporphyrinogen oxidase subfamily. The cofactor is FAD.

It localises to the plastid. Its subcellular location is the chloroplast. It carries out the reaction protoporphyrinogen IX + 3 O2 = protoporphyrin IX + 3 H2O2. The protein operates within porphyrin-containing compound metabolism; protoporphyrin-IX biosynthesis; protoporphyrin-IX from protoporphyrinogen-IX: step 1/1. It participates in porphyrin-containing compound metabolism; chlorophyll biosynthesis. In terms of biological role, catalyzes the 6-electron oxidation of protoporphyrinogen-IX to form protoporphyrin-IX. This is Protoporphyrinogen oxidase, chloroplastic (PPOX1) from Oryza sativa subsp. japonica (Rice).